The chain runs to 1311 residues: Zinc finger protein 423 (1311 aa).

Positions 1 to 11 (MSRRKQAKPRS) are enriched in basic residues. Disordered regions lie at residues 1 to 21 (MSRRKQAKPRSVKVEEGEASD), 34 to 70 (GGLEGESECDRKSSRALEDRNSVTSQEERNEDDEDVE), and 95 to 123 (AHRCPGDGDDDPQLSWVASSPSSKDVASP). Residues 41–54 (ECDRKSSRALEDRN) show a composition bias toward basic and acidic residues. Phosphoserine occurs at positions 55 and 58. The C2H2-type 1; degenerate zinc-finger motif lies at 75-101 (YTCDHCQQDFESLADLTDHRAHRCPGD). Residues 110-123 (WVASSPSSKDVASP) show a composition bias toward polar residues. 7 consecutive C2H2-type zinc fingers follow at residues 146–168 (YPCQFCDKSFIRLSYLKRHEQIH), 174–196 (FKCTFCSRLFKHKRSRDRHIKLH), 202–224 (YHCHECEAAFSRRDHLKIHLKTH), 230–252 (FKCSVCKRGFSSTSSLQSHMQAH), 271–294 (FMCDYCEDTFSQTEELEKHVLTLH), 303–326 (LQCIHCPEVFVDESTLLAHIHQAH), and 331–353 (HKCPMCPEQFSSVEGVYCHLDSH). A disordered region spans residues 354 to 426 (RQPDSSNHSV…PLRGQKKMRD (73 aa)). The span at 373–382 (ASMSSATPDS) shows a compositional bias: polar residues. Residues 390–404 (SVASMSSATPDSSAS) show a composition bias toward low complexity. The segment at 436 to 460 (YSCPYCSKRDFTSLAVLEIHLKTIH) adopts a C2H2-type 9; degenerate zinc-finger fold. 3 C2H2-type zinc fingers span residues 468–491 (HTCQICLDSMPTLYNLNEHVRKLH), 507–530 (FHCNYCPEMFADINSLQEHIRVSH), and 544–567 (FFCNQCSMGFLTESSLTEHIQQAH). The C2H2-type 13; atypical zinc finger occupies 590–615 (YSCPYCTNSPIFGSILKLTKHIKENH). The disordered stretch occupies residues 617–654 (NIPLAHSKKSKAEQSPVSSDVEVSSPKRQRLSGSANSI). Phosphoserine is present on Ser-631. Residues 631–642 (SPVSSDVEVSSP) show a composition bias toward low complexity. C2H2-type zinc fingers lie at residues 659 to 681 (YPCNQCDLKFSNFESFQTHLKLH), 689 to 711 (QACPQCKEDFDSQESLLQHLTVH), 719 to 742 (YVCESCDKQFSSVDDLQKHLLDMH), 747 to 770 (YHCTLCQEVFDSKVSIQVHLAVKH), 777 to 800 (YRCTACNWDFRKEADLQVHVKHSH), 808 to 830 (HKCIFCGETFSTEVELQCHITTH), and 834 to 857 (YNCRFCSKAFHAVLLLEKHLREKH). Residues 913-935 (YGCDICGAAYTMEVLLQNHRLRD) form a C2H2-type 21; degenerate zinc finger. C2H2-type zinc fingers lie at residues 957–979 (HKCNVCSRTFFSENGLREHLQTH), 986–1008 (YMCPICGERFPSLLTLTEHKVTH), and 1047–1069 (FRCVVCMQTVTSTLELKIHGTFH). Ser-1081 is subject to Phosphoserine. Residues 1091-1109 (YKCALCLKEFRSKQDLVRL) form a C2H2-type 25; degenerate zinc finger. 5 C2H2-type zinc fingers span residues 1147–1170 (LRCPECNVKFESAEDLESHMQVDH), 1195–1217 (YQCIKCQMTFENEREIQIHVANH), 1225–1247 (HECKLCNQMFDSPAKLLCHLIEH), 1256–1279 (FKCPVCFTVFVQANKLQQHIFAVH), and 1286–1309 (YDCSQCPQKFFFQTELQNHTMSQH). Positions 1163–1174 (ESHMQVDHRDLT) are enriched in basic and acidic residues. Residues 1163-1190 (ESHMQVDHRDLTPETSGPRKGAQTSPVP) are disordered.

It belongs to the krueppel C2H2-type zinc-finger protein family. In terms of assembly, homodimer. Interacts with PARP1, SMAD1 and SMAD4. Interacts with EBF1. Interacts with CEP290. Expressed in brain, eye, olfactory epithelium, spleen and heart. Expressed in the basal layer, consisting of neural precursor cells and immature sensory neurons of the olfactory epithelium, but not in the mature receptor cells.

The protein resides in the nucleus. In terms of biological role, transcription factor that can both act as an activator or a repressor depending on the context. Plays a central role in BMP signaling and olfactory neurogenesis. Associates with SMADs in response to BMP2 leading to activate transcription of BMP target genes. Acts as a transcriptional repressor via its interaction with EBF1, a transcription factor involved in terminal olfactory receptor neurons differentiation; this interaction preventing EBF1 to bind DNA and activate olfactory-specific genes. Involved in olfactory neurogenesis by participating in a developmental switch that regulates the transition from differentiation to maturation in olfactory receptor neurons. Controls proliferation and differentiation of neural precursors in cerebellar vermis formation. The sequence is that of Zinc finger protein 423 (Znf423) from Rattus norvegicus (Rat).